Consider the following 298-residue polypeptide: Glycine--tRNA ligase alpha subunit (298 aa).

The protein belongs to the class-II aminoacyl-tRNA synthetase family. As to quaternary structure, tetramer of two alpha and two beta subunits.

The protein localises to the cytoplasm. The catalysed reaction is tRNA(Gly) + glycine + ATP = glycyl-tRNA(Gly) + AMP + diphosphate. This Helicobacter pylori (strain P12) protein is Glycine--tRNA ligase alpha subunit.